A 466-amino-acid chain; its full sequence is Soluble pyridine nucleotide transhydrogenase (466 aa).

36-45 (ERYHNVGGGC) contributes to the FAD binding site.

This sequence belongs to the class-I pyridine nucleotide-disulfide oxidoreductase family. FAD serves as cofactor.

It localises to the cytoplasm. The catalysed reaction is NAD(+) + NADPH = NADH + NADP(+). Functionally, conversion of NADPH, generated by peripheral catabolic pathways, to NADH, which can enter the respiratory chain for energy generation. The sequence is that of Soluble pyridine nucleotide transhydrogenase from Citrobacter koseri (strain ATCC BAA-895 / CDC 4225-83 / SGSC4696).